The sequence spans 200 residues: Probable GTP-binding protein EngB (200 aa).

Positions 30–199 (KKAEVAIAGR…EDYIYENWIK (170 aa)) constitute an EngB-type G domain. Residues 38 to 45 (GRSNAGKS), 64 to 68 (GKTRL), 82 to 85 (DMPG), 149 to 152 (TKAD), and 178 to 180 (VSA) each bind GTP. The Mg(2+) site is built by Ser45 and Thr66.

This sequence belongs to the TRAFAC class TrmE-Era-EngA-EngB-Septin-like GTPase superfamily. EngB GTPase family. It depends on Mg(2+) as a cofactor.

Necessary for normal cell division and for the maintenance of normal septation. The protein is Probable GTP-binding protein EngB of Bdellovibrio bacteriovorus (strain ATCC 15356 / DSM 50701 / NCIMB 9529 / HD100).